The sequence spans 104 residues: Small ribosomal subunit protein uS10 (104 aa).

The protein belongs to the universal ribosomal protein uS10 family. As to quaternary structure, part of the 30S ribosomal subunit.

Functionally, involved in the binding of tRNA to the ribosomes. The polypeptide is Small ribosomal subunit protein uS10 (Aquifex aeolicus (strain VF5)).